The primary structure comprises 26 residues: Halocyntin (26 aa).

Functionally, has strong antibacterial activity against the Gram-positive bacteria M.luteus, S.aureus, B.megaterium, A.viridans and E.faecalis, and against the Gram-negative bacterium K.pneumoniae. Has less potent antibacterial activity against the Gram-negative bacteria E.coli DH5alpha, S.typhimurium, P.aeruginosa, E.aerogenes and N.gonorrhoeae. Has moderate hemolytic activity against sheep erythrocytes. This is Halocyntin from Halocynthia papillosa (Red sea-squirt).